Here is a 682-residue protein sequence, read N- to C-terminus: Putative protein RhsE (682 aa).

Residues 348–360 show a composition bias toward basic and acidic residues; the sequence is ENGEREKAQRRSL. The tract at residues 348–372 is disordered; sequence ENGEREKAQRRSLAETLQQEGSENG.

Belongs to the RHS family.

Functionally, rhs elements have a nonessential function. They may play an important role in the natural ecology of the cell. The polypeptide is Putative protein RhsE (rhsE) (Escherichia coli (strain K12)).